The primary structure comprises 408 residues: Bone morphogenetic protein 4 (408 aa).

Residues 1–19 (MIPGNRMLMVVLLCQVLLG) form the signal peptide. A propeptide spanning residues 20 to 292 (GASHASLIPE…HTLTRRRAKR (273 aa)) is cleaved from the precursor. Position 91 is a phosphoserine (serine 91). A disordered region spans residues 91–111 (SGEEEEEEQSQGTGLEYPERP). N-linked (GlcNAc...) asparagine glycosylation is found at asparagine 144 and asparagine 209. Residues 281–307 (RGHTLTRRRAKRSPKHHPQRSRKKNKN) are disordered. The segment covering 284 to 307 (TLTRRRAKRSPKHHPQRSRKKNKN) has biased composition (basic residues). 3 disulfides stabilise this stretch: cysteine 308-cysteine 373, cysteine 337-cysteine 405, and cysteine 341-cysteine 407. Asparagine 350 and asparagine 365 each carry an N-linked (GlcNAc...) asparagine glycan.

Belongs to the TGF-beta family. As to quaternary structure, homodimer; disulfide-linked. Interacts with SOSTDC1, GREM2, RGMA, RGMB and RGMC. Part of a complex consisting of TWSG1 and CHRD. Interacts with the serine proteases, HTRA1 and HTRA3; the interaction with either inhibits BMP4-mediated signaling. The HTRA protease activity is required for this inhibition. Interacts with FBN1 (via N-terminal domain) and FBN2. Interacts with type I receptor BMPR1A. Interacts with type II receptor BMPR2. Interacts with FSTL1; this interaction inhibits the activation of the BMP4/Smad1/5/8 signaling pathway. Interacts with SCUBE3. Interacts with TGFBR3. In the cochlea, detected in nonprosensory regions and outer sulcus (at protein level). Prior to gastrulation, expressed in the extraembryonic ectoderm. Later, expressed in the extraembryonic mesoderm.

Its subcellular location is the secreted. The protein localises to the extracellular space. It localises to the extracellular matrix. Growth factor of the TGF-beta superfamily that plays essential roles in many developmental processes, including neurogenesis, vascular development, angiogenesis and osteogenesis. Acts in concert with PTHLH/PTHRP to stimulate ductal outgrowth during embryonic mammary development and to inhibit hair follicle induction. Initiates the canonical BMP signaling cascade by associating with type I receptor BMPR1A and type II receptor BMPR2. Once all three components are bound together in a complex at the cell surface, BMPR2 phosphorylates and activates BMPR1A. In turn, BMPR1A propagates signal by phosphorylating SMAD1/5/8 that travel to the nucleus and act as activators and repressors of transcription of target genes. Positively regulates the expression of odontogenic development regulator MSX1 via inducing the IPO7-mediated import of SMAD1 to the nucleus. Required for MSX1-mediated mesenchymal molar tooth bud development beyond the bud stage, via promoting Wnt signaling. Acts as a positive regulator of odontoblast differentiation during mesenchymal tooth germ formation, expression is repressed during the bell stage by MSX1-mediated inhibition of CTNNB1 signaling. Able to induce its own expression in dental mesenchymal cells and also in the neighboring dental epithelial cells via an MSX1-mediated pathway. Can also signal through non-canonical BMP pathways such as ERK/MAP kinase, PI3K/Akt or SRC cascades. For example, induces SRC phosphorylation which, in turn, activates VEGFR2, leading to an angiogenic response. The chain is Bone morphogenetic protein 4 from Mus musculus (Mouse).